The chain runs to 92 residues: Small ribosomal subunit protein uS19 (92 aa).

The protein belongs to the universal ribosomal protein uS19 family.

In terms of biological role, protein S19 forms a complex with S13 that binds strongly to the 16S ribosomal RNA. The polypeptide is Small ribosomal subunit protein uS19 (Borrelia hermsii (strain HS1 / DAH)).